An 89-amino-acid polypeptide reads, in one-letter code: Dynein light chain 2, cytoplasmic (89 aa).

Belongs to the dynein light chain family.

Its subcellular location is the cytoplasm. The protein resides in the cytoskeleton. In terms of biological role, acts as a non-catalytic accessory component of a dynein complex. The protein is Dynein light chain 2, cytoplasmic (Cdlc2) of Drosophila melanogaster (Fruit fly).